The primary structure comprises 431 residues: Trigger factor (431 aa).

Residues 165 to 250 (GDTVVIDFDG…IHELKRKELP (86 aa)) enclose the PPIase FKBP-type domain.

It belongs to the FKBP-type PPIase family. Tig subfamily.

It is found in the cytoplasm. It catalyses the reaction [protein]-peptidylproline (omega=180) = [protein]-peptidylproline (omega=0). Its function is as follows. Involved in protein export. Acts as a chaperone by maintaining the newly synthesized protein in an open conformation. Functions as a peptidyl-prolyl cis-trans isomerase. The sequence is that of Trigger factor from Leuconostoc mesenteroides subsp. mesenteroides (strain ATCC 8293 / DSM 20343 / BCRC 11652 / CCM 1803 / JCM 6124 / NCDO 523 / NBRC 100496 / NCIMB 8023 / NCTC 12954 / NRRL B-1118 / 37Y).